Consider the following 312-residue polypeptide: Ribosomal RNA small subunit methyltransferase H (312 aa).

Residues Ser-33–His-35, Asp-53, Phe-80, Asp-101, and Gln-108 contribute to the S-adenosyl-L-methionine site.

Belongs to the methyltransferase superfamily. RsmH family.

It is found in the cytoplasm. The catalysed reaction is cytidine(1402) in 16S rRNA + S-adenosyl-L-methionine = N(4)-methylcytidine(1402) in 16S rRNA + S-adenosyl-L-homocysteine + H(+). Functionally, specifically methylates the N4 position of cytidine in position 1402 (C1402) of 16S rRNA. The chain is Ribosomal RNA small subunit methyltransferase H from Desulforapulum autotrophicum (strain ATCC 43914 / DSM 3382 / VKM B-1955 / HRM2) (Desulfobacterium autotrophicum).